Here is a 427-residue protein sequence, read N- to C-terminus: MSRSETLFANAQKHIPGGVNSPVRAFKSVGGTPLFFKHAAGAYVTDEDDKRYVDYVGSWGPMILGHSHPDVLDAVRNQLEHGLSYGAPTAMETEMADLVCELVPSMEMVRMVSSGTEATMSAIRLARGFTGRDSIIKFEGCYHGHSDSLLVKAGSGALTLGVPSSPGVPAAFAKHTLTVPFNDLNAVRDLLAEVGQEVACIIVEPVAGNMNCVPPAPGYLQGLRALCDEHGVVLIFDEVMTGFRVALGGAQAYYDVKPDLSTFGKIIGGGMPVGCFGGKREIMSHIAPLGPVYQAGTLSGNPLAMAAGLTTLRLISRPGFHDELSDYTRRLLEGLQQRADAAGIAFVTTQAGGMFGLYFSDASEIVTFEDVMTSDAERFKRFFHLMLEGGVYLAPSAFEAGFTSIAHGDAELKLTLDAAEKAFAALK.

An N6-(pyridoxal phosphate)lysine modification is found at K265.

The protein belongs to the class-III pyridoxal-phosphate-dependent aminotransferase family. HemL subfamily. Homodimer. Requires pyridoxal 5'-phosphate as cofactor.

The protein resides in the cytoplasm. The enzyme catalyses (S)-4-amino-5-oxopentanoate = 5-aminolevulinate. It participates in porphyrin-containing compound metabolism; protoporphyrin-IX biosynthesis; 5-aminolevulinate from L-glutamyl-tRNA(Glu): step 2/2. The protein is Glutamate-1-semialdehyde 2,1-aminomutase of Pseudomonas syringae pv. tomato (strain ATCC BAA-871 / DC3000).